A 282-amino-acid chain; its full sequence is Formamidopyrimidine-DNA glycosylase (282 aa).

The active-site Schiff-base intermediate with DNA is the Pro2. The Proton donor role is filled by Glu3. The Proton donor; for beta-elimination activity role is filled by Lys60. Residues His99, Arg118, and Arg163 each coordinate DNA. The FPG-type zinc-finger motif lies at 248–282 (WVYGRTGEPCRVCGTSIERLKLGGRSAHFCPRCQA). The active-site Proton donor; for delta-elimination activity is Arg272.

Belongs to the FPG family. In terms of assembly, monomer. It depends on Zn(2+) as a cofactor.

It carries out the reaction Hydrolysis of DNA containing ring-opened 7-methylguanine residues, releasing 2,6-diamino-4-hydroxy-5-(N-methyl)formamidopyrimidine.. The catalysed reaction is 2'-deoxyribonucleotide-(2'-deoxyribose 5'-phosphate)-2'-deoxyribonucleotide-DNA = a 3'-end 2'-deoxyribonucleotide-(2,3-dehydro-2,3-deoxyribose 5'-phosphate)-DNA + a 5'-end 5'-phospho-2'-deoxyribonucleoside-DNA + H(+). Functionally, involved in base excision repair of DNA damaged by oxidation or by mutagenic agents. Acts as a DNA glycosylase that recognizes and removes damaged bases. Has a preference for oxidized purines, such as 7,8-dihydro-8-oxoguanine (8-oxoG). Has AP (apurinic/apyrimidinic) lyase activity and introduces nicks in the DNA strand. Cleaves the DNA backbone by beta-delta elimination to generate a single-strand break at the site of the removed base with both 3'- and 5'-phosphates. This chain is Formamidopyrimidine-DNA glycosylase, found in Rippkaea orientalis (strain PCC 8801 / RF-1) (Cyanothece sp. (strain PCC 8801)).